The primary structure comprises 353 residues: Heat-inducible transcription repressor HrcA (353 aa).

Belongs to the HrcA family.

Functionally, negative regulator of class I heat shock genes (grpE-dnaK-dnaJ and groELS operons). Prevents heat-shock induction of these operons. This is Heat-inducible transcription repressor HrcA from Anaeromyxobacter dehalogenans (strain 2CP-1 / ATCC BAA-258).